A 355-amino-acid polypeptide reads, in one-letter code: NADH-quinone oxidoreductase subunit H (355 aa).

8 helical membrane passes run 25-45 (IVRILVVAVVILLCVAYLILW), 91-111 (WLYLIAPVMTVVPAFAVWAVI), 126-146 (LLYAMAISSIGVYAVILAGWA), 170-190 (MGFALVLVLMTAGSLNLSEIV), 205-225 (FLSWNWLPLLPAFVVYFVSGI), 253-273 (MAFALFFLAEYINMIVISALA), 290-310 (FIPGVFWLVLKVFALLSVFIW), and 330-350 (VFLPVTVIWVVVVGFWMMSPL).

This sequence belongs to the complex I subunit 1 family. NDH-1 is composed of 14 different subunits. Subunits NuoA, H, J, K, L, M, N constitute the membrane sector of the complex.

Its subcellular location is the cell inner membrane. The enzyme catalyses a quinone + NADH + 5 H(+)(in) = a quinol + NAD(+) + 4 H(+)(out). In terms of biological role, NDH-1 shuttles electrons from NADH, via FMN and iron-sulfur (Fe-S) centers, to quinones in the respiratory chain. The immediate electron acceptor for the enzyme in this species is believed to be ubiquinone. Couples the redox reaction to proton translocation (for every two electrons transferred, four hydrogen ions are translocated across the cytoplasmic membrane), and thus conserves the redox energy in a proton gradient. This subunit may bind ubiquinone. The sequence is that of NADH-quinone oxidoreductase subunit H from Burkholderia ambifaria (strain MC40-6).